A 345-amino-acid chain; its full sequence is Biotin synthase (345 aa).

The region spanning 38–256 (GEVQVSTLLS…IAVARIMMPR (219 aa)) is the Radical SAM core domain. Residues Cys53, Cys57, and Cys60 each contribute to the [4Fe-4S] cluster site. Cys97, Cys128, Cys188, and Arg260 together coordinate [2Fe-2S] cluster.

The protein belongs to the radical SAM superfamily. Biotin synthase family. In terms of assembly, homodimer. [4Fe-4S] cluster serves as cofactor. The cofactor is [2Fe-2S] cluster.

The catalysed reaction is (4R,5S)-dethiobiotin + (sulfur carrier)-SH + 2 reduced [2Fe-2S]-[ferredoxin] + 2 S-adenosyl-L-methionine = (sulfur carrier)-H + biotin + 2 5'-deoxyadenosine + 2 L-methionine + 2 oxidized [2Fe-2S]-[ferredoxin]. It functions in the pathway cofactor biosynthesis; biotin biosynthesis; biotin from 7,8-diaminononanoate: step 2/2. In terms of biological role, catalyzes the conversion of dethiobiotin (DTB) to biotin by the insertion of a sulfur atom into dethiobiotin via a radical-based mechanism. The sequence is that of Biotin synthase from Sodalis glossinidius (strain morsitans).